The following is a 402-amino-acid chain: UDP-glucose 6-dehydrogenase (402 aa).

Residues 2-19, V11, D29, K34, T83, T118, and E145 each bind NAD(+); that span reads KIAV…GVLL. Residues 141–145, K204, N208, 249–253, and G257 contribute to the substrate site; these read EFLRE and YNNPS. Y259 contributes to the NAD(+) binding site. C260 acts as the Nucleophile in catalysis. An NAD(+)-binding site is contributed by K263. A substrate-binding site is contributed by K320. Residue R327 participates in NAD(+) binding.

It belongs to the UDP-glucose/GDP-mannose dehydrogenase family.

The catalysed reaction is UDP-alpha-D-glucose + 2 NAD(+) + H2O = UDP-alpha-D-glucuronate + 2 NADH + 3 H(+). It participates in nucleotide-sugar biosynthesis; UDP-alpha-D-glucuronate biosynthesis; UDP-alpha-D-glucuronate from UDP-alpha-D-glucose: step 1/1. In terms of biological role, catalyzes the formation of UDP-glucuronic acid which is required for capsular hyaluronic acid synthesis. In Streptococcus pyogenes serotype M18 (strain MGAS8232), this protein is UDP-glucose 6-dehydrogenase (hasB).